The chain runs to 219 residues: MSDVNSVLRKQLLNGAAQMGVAPGERQTEQLLAYIREFEKWNKAYNLSAVRDVTQMVARHLLDSLSVVPWIARSPYPLARMIDVGTGGGLPGIPLAIMFPEKTFTLLDSNGKKTRFLFHVKTLLGLDNVTVENRRVEEFAPAGLFQGVISRAFASLQDMTEGCAGLLAPGGIYLAMKGLFPEDELVPIAGKIRLVETVKLQVAETDGERHLLILQPQEP.

S-adenosyl-L-methionine is bound by residues G85, L90, 136–137, and R151; that span reads VE.

This sequence belongs to the methyltransferase superfamily. RNA methyltransferase RsmG family.

Its subcellular location is the cytoplasm. It catalyses the reaction guanosine(527) in 16S rRNA + S-adenosyl-L-methionine = N(7)-methylguanosine(527) in 16S rRNA + S-adenosyl-L-homocysteine. In terms of biological role, specifically methylates the N7 position of guanine in position 527 of 16S rRNA. In Cellvibrio japonicus (strain Ueda107) (Pseudomonas fluorescens subsp. cellulosa), this protein is Ribosomal RNA small subunit methyltransferase G.